The chain runs to 482 residues: Early growth response protein 4 (482 aa).

Positions 274–357 (DLGEGAESLP…PPAKARRKGR (84 aa)) are disordered. A compositionally biased stretch (low complexity) spans 280–290 (ESLPGLLTPPS). A compositionally biased stretch (gly residues) spans 291-302 (GEGGSSGEGGEF). Residues 337–349 (PEPPVPPPAPFPP) are compositionally biased toward pro residues. C2H2-type zinc fingers lie at residues 376-400 (FACPVESCVRSFARSDELNRHLRIH), 406-428 (FQCRICLRNFSRSDHLTTHVRTH), and 434-456 (FACDVCGRRFARSDEKKRHSKVH).

This sequence belongs to the EGR C2H2-type zinc-finger protein family. As to expression, expressed in brain. In the cerebellum and frontal cortex.

The protein localises to the nucleus. In terms of biological role, transcriptional regulator. Recognizes and binds to the DNA sequence 5'-GCGGGGGCG-3' (GSG). Activates the transcription of target genes whose products are required for mitogenesis and differentiation. This chain is Early growth response protein 4 (EGR4), found in Bos taurus (Bovine).